The chain runs to 874 residues: MTADKEKKRSSSELRKEKSRDAARCRRSKETEVFYELAHELPLPHSVSSHLDKASIMRLAISFLRTHKLLSSVCSENESEAEADQQMDNLYLKALEGFIAVVTQDGDMIFLSENISKFMGLTQVELTGHSIFDFTHPCDHEEIRENLTLKNGSGFGKKSKDVSTERDFFMRMKCTVTNRGRTVNLKSATWKVLHCTGQVRVYNNCPPHSSLCGSKEPLLSCLIIMCEPIQHPSHMDIPLDSKTFLSRHSMDMKFTYCDDRILELIGYHPEELLGRSAYEFYHALDSENMTKSHQNLCTKGQVVSGQYRMLAKHGGYVWLETQGTVIYNPRNLQPQCIMCVNYVLSEIEKNDVVFSMDQTESLFKPHLMAMNSIFDSSDDVAVTEKSNYLFTKLKEEPEELAQLAPTPGDAIISLDFGSQNFDEPSAYGKAILPPGQPWVSGLRSHSAQSESGSLPAFTVPQADTPGNTTPSASSSSSCSTPSSPEDYYSSLENPLKIEVIEKLFAMDTEPRDPGSTQTDFSELDLETLAPYIPMDGEDFQLSPICPEEPLMPESPQPTPQHCFSTMTSIFQPLTPGATHGPFFLDKYPQQLESRKTESEHWPMSSIFFDAGSKGSLSPCCGQASTPLSSMGGRSNTQWPPDPPLHFGPTKWPVGDQSAESLGALPVGSSQLEPPSAPPHVSMFKMRSAKDFGARGPYMMSPAMIALSNKLKLKRQLEYEEQAFQDTSGGDPPGTSSSHLMWKRMKSLMGGTCPLMPDKTISANMAPDEFTQKSMRGLGQPLRHLPPPQPPSTRSSGENAKTGFPPQCYASQFQDYGPPGAQKVSGVASRLLGPSFEPYLLPELTRYDCEVNVPVPGSSTLLQGRDLLRALDQAT.

Residues 1 to 23 (MTADKEKKRSSSELRKEKSRDAA) form a disordered region. The bHLH domain maps to 14-67 (LRKEKSRDAARCRRSKETEVFYELAHELPLPHSVSSHLDKASIMRLAISFLRTH). The DNA-binding stretch occupies residues 26-53 (RRSKETEVFYELAHELPLPHSVSSHLDK). Positions 84 to 154 (DQQMDNLYLK…ENLTLKNGSG (71 aa)) constitute a PAS 1 domain. Positions 171 to 192 (RMKCTVTNRGRTVNLKSATWKV) are required for heterodimer formation with ARNT. The PAS 2 domain maps to 230–300 (QHPSHMDIPL…KSHQNLCTKG (71 aa)). The 44-residue stretch at 304–347 (SGQYRMLAKHGGYVWLETQGTVIYNPRNLQPQCIMCVNYVLSEI) folds into the PAC domain. P405 is subject to 4-hydroxyproline. The tract at residues 438–489 (WVSGLRSHSAQSESGSLPAFTVPQADTPGNTTPSASSSSSCSTPSSPEDYYS) is disordered. The span at 443–452 (RSHSAQSESG) shows a compositional bias: polar residues. Residues 464 to 484 (TPGNTTPSASSSSSCSTPSSP) are compositionally biased toward low complexity. An NTAD region spans residues 495–541 (LKIEVIEKLFAMDTEPRDPGSTQTDFSELDLETLAPYIPMDGEDFQL). A 4-hydroxyproline modification is found at P530. A disordered region spans residues 777 to 803 (LGQPLRHLPPPQPPSTRSSGENAKTGF). Positions 834 to 874 (SFEPYLLPELTRYDCEVNVPVPGSSTLLQGRDLLRALDQAT) are CTAD. Position 844 is a phosphothreonine (T844). At N851 the chain carries (3S)-3-hydroxyasparagine.

Interacts with HIF3A isoform 2. Efficient DNA binding requires dimerization with another bHLH protein. Heterodimerizes with ARNT; heterodimer binds to core DNA sequence 5'-TACGTG-3' within the hypoxia response element (HRE) of target gene promoters. Interacts with CREBBP. Interacts with EGLN1. Interacts with VHL. In normoxia, is probably hydroxylated on Pro-405 and Pro-530 by EGLN1/PHD1, EGLN2/PHD2 and/or EGLN3/PHD3. The hydroxylated prolines promote interaction with VHL, initiating rapid ubiquitination and subsequent proteasomal degradation. Under hypoxia, proline hydroxylation is impaired and ubiquitination is attenuated, resulting in stabilization. In terms of processing, in normoxia, is hydroxylated on Asn-851 by HIF1AN thus probably abrogating interaction with CREBBP and EP300 and preventing transcriptional activation. Post-translationally, phosphorylated on multiple sites in the CTAD. The iron and 2-oxoglutarate dependent 3-hydroxylation of asparagine is (S) stereospecific within HIF CTAD domains. As to expression, expressed in most tissues, with highest levels in lung, followed by heart, kidney, brain and liver. Predominantly expressed in endothelial cells. Also found in smooth muscle cells of the uterus, neurons, and brown adipose tissue. High expression in embryonic choroid plexus and kidney glomeruli.

The protein localises to the nucleus. Its subcellular location is the nucleus speckle. In terms of biological role, transcription factor involved in the induction of oxygen regulated genes. Heterodimerizes with ARNT; heterodimer binds to core DNA sequence 5'-TACGTG-3' within the hypoxia response element (HRE) of target gene promoters. Regulates the vascular endothelial growth factor (VEGF) expression and seems to be implicated in the development of blood vessels and the tubular system of lung. May also play a role in the formation of the endothelium that gives rise to the blood brain barrier. Potent activator of the Tie-2 tyrosine kinase expression. Activation requires recruitment of transcriptional coactivators such as CREBBP and probably EP300. Interaction with redox regulatory protein APEX seems to activate CTAD. This Mus musculus (Mouse) protein is Endothelial PAS domain-containing protein 1 (Epas1).